A 938-amino-acid chain; its full sequence is Kinesin-like protein KIN-7B (938 aa).

The 320-residue stretch at 29–348 folds into the Kinesin motor domain; sequence KILVTVRMRP…LSFAMSAKEV (320 aa). 113-120 contributes to the ATP binding site; that stretch reads GQTSSGKT. Positions 357 to 431 form a coiled coil; sequence VVSEKKLLKH…DLERKAKERK (75 aa). A disordered region spans residues 450–481; the sequence is TKEESIPSKSVPSSRRTARDRRKDNVRQSLTS. A coiled-coil region spans residues 555-590; it reads KANLKEEINRLNSQEIAALEKKLECVQNTIDMLVSS. Residues 628-678 form a disordered region; sequence CSPLSGTENKDPESNVVSANSAPVSFGATPPKRDDNRCRTQSREGTPVSRQ. Residues 641–652 are compositionally biased toward low complexity; it reads SNVVSANSAPVS. A compositionally biased stretch (basic and acidic residues) spans 658–669; it reads PKRDDNRCRTQS.

This sequence belongs to the TRAFAC class myosin-kinesin ATPase superfamily. Kinesin family. KIN-7 subfamily. In terms of assembly, interacts with ANP3. Interacts with TIO/FU. Expressed in roots, stems, flowers, pollen mother cells and embryos.

Its subcellular location is the cytoplasm. The protein localises to the cytoskeleton. It localises to the phragmoplast. Functionally, probable plus end-directed motor protein that functions in the NACK-PQR (ANP3-MKK6-MPK4) MAP kinase signaling pathway, which is essential for somatic cell cytokinesis, especially for the cell-plate formation and its expansion. May regulate the activity and the localization of ANP3, probably by association through the non-catalytic region of the kinase. Functionally redundant with NACK1 and essential to promote the progression of cytokinesis and for cellularization (formation of the cell plate) during microgametogenesis and megagametogenesis. The chain is Kinesin-like protein KIN-7B from Arabidopsis thaliana (Mouse-ear cress).